A 608-amino-acid polypeptide reads, in one-letter code: Afamin (608 aa).

Residues 1–21 (MRHLKLTGFIFFLLPLTESLA) form the signal peptide. Albumin domains are found at residues 22 to 210 (LPTK…APIT), 211 to 403 (QYLK…KFNE), and 404 to 599 (TTQR…KTGD). N33 carries an N-linked (GlcNAc...) asparagine glycan. Cystine bridges form between C77–C86, C99–C114, C113–C124, C148–C193, C192–C201, C224–C270, C269–C277, C289–C303, C302–C313, C340–C385, and C384–C393. A glycan (N-linked (GlcNAc...) asparagine) is linked at N109. The N-linked (GlcNAc...) asparagine glycan is linked to N153. The tract at residues 215–319 (ASSSYQRNVC…REACIINANK (105 aa)) is binding pocket for hydrophobic ligands. A glycan (N-linked (GlcNAc...) asparagine) is linked at N402. Cystine bridges form between C416–C462, C461–C470, C483–C499, C498–C509, and C580–C589. A glycan (N-linked (GlcNAc...) asparagine) is linked at N488. Residues 583-608 (VQEPESCFSPESSKTGDESQATEKQR) are disordered. Positions 596-608 (KTGDESQATEKQR) are enriched in basic and acidic residues.

The protein belongs to the ALB/AFP/VDB family. As to quaternary structure, forms a 1:1 complex with Wnt family members; interacts with WNT1, WNT2B, WNT3, WNT5A, WNT7A, WNT7B, WNT8, WNT9A, WNT9B, WNT10A and WNT10B. Interacts with WNT3A. N-glycosylated; more than 90% of the glycans are sialylated. As to expression, detected in brain, especially on brain capillaries (at protein level). Expressed in isolated brain capillaries.

It localises to the secreted. Its function is as follows. Functions as a carrier for hydrophobic molecules in body fluids. Essential for the solubility and activity of lipidated Wnt family members, including WNT1, WNT2B, WNT3, WNT3A, WNT5A, WNT7A, WNT7B, WNT8, WNT9A, WNT9B, WNT10A and WNT10B. Binds vitamin E. May transport vitamin E in body fluids under conditions where the lipoprotein system is not sufficient. May be involved in the transport of vitamin E across the blood-brain barrier. The protein is Afamin (Afm) of Mus musculus (Mouse).